Here is a 313-residue protein sequence, read N- to C-terminus: MAINKAVSIDTAFQTIMQELRERSARFLGTKQAVSEEKAEFDCPYCKDRGIVVYRVHKDTSWHLDEQLDLMVPDDMVSEDDFLLGKVCTPDKASEWKDTYSKQCECVRRKKIARLMAASGITEEFEKLLFGNFITDGKPDMIKDAYECAVEYYKDFQKIKGERQNSIALLGQPGSGKTHLLTAIMNNLIKKKSVHCMYFPYVEGMGDLKANFDNLEAKLDAMRKVEVLFIDDLFKPINGQPRATDWQVEQIQSVLNYRYLNHKPLLISSELTIDEILDIDEALGSRIHQMCRDYIVIIRGDRMQLNHRLGDWE.

The protein to B.subtilis YqxC and T.hyodysenteriae hemolysin TlyA.

This is an uncharacterized protein from Bacillus subtilis (strain 168).